A 1027-amino-acid polypeptide reads, in one-letter code: Abnormal embryogenesis protein 30 (1027 aa).

WD repeat units lie at residues 18 to 65 (RTPF…IQAV) and 70 to 109 (KLDSSVSALHFSPDGRFLAAATSKGIIHLLDVETGKVRFS). Disordered regions lie at residues 619–655 (NDSSPFLEEDEGEPEQEEQKPDEEPEPEGEPQPACDL) and 1005–1027 (AMDSGRDLTDNGESDEDEEDDDI). 2 stretches are compositionally biased toward acidic residues: residues 625–647 (LEEDEGEPEQEEQKPDEEPEPEG) and 1014–1027 (DNGESDEDEEDDDI).

It belongs to the APC4 family. As to quaternary structure, the APC/C is probably composed of at least 12 subunits: apc-2, apc-10, apc-11, cdc-26, emb-1, emb-27, emb-30, mat-1, mat-2, mat-3, such-1 and gfi-3.

It participates in protein modification; protein ubiquitination. Functionally, probable component of the anaphase promoting complex/cyclosome (APC/C), a cell cycle-regulated E3 ubiquitin ligase that controls progression through mitosis and the G1 phase of the cell cycle. The APC/C complex acts by mediating ubiquitination and subsequent degradation of target proteins. Developmental role in early embryogenesis and the metaphase to anaphase transition in oocyte and spermatocyte meiosis and mitosis in somatic and germ cells. Required for embryonic anterior-posterior axis formation. Negatively regulates ify-1 protein levels during meiosis I. Plays a role in regulating the abundance of glr-1 receptors in postmitotic neurons, which may in turn control animal locomotion. Involved in regulating GABA neurotransmitter release at neuromuscular junctions in GABA motor neurons. The polypeptide is Abnormal embryogenesis protein 30 (Caenorhabditis elegans).